Here is a 411-residue protein sequence, read N- to C-terminus: Epoxyqueuosine reductase (411 aa).

Asp171 (proton donor) is an active-site residue. Residues 213 to 245 (LPLPVDKPQEEQCGRCVACMTTCPTGAIVAPYT) form the 4Fe-4S ferredoxin-type domain. [4Fe-4S] cluster contacts are provided by Cys225, Cys228, Cys231, Cys235, Cys251, Cys278, Cys281, and Cys285.

Belongs to the QueG family. In terms of assembly, monomer. The cofactor is cob(II)alamin. [4Fe-4S] cluster is required as a cofactor.

The protein localises to the cytoplasm. The enzyme catalyses epoxyqueuosine(34) in tRNA + AH2 = queuosine(34) in tRNA + A + H2O. The protein operates within tRNA modification; tRNA-queuosine biosynthesis. Catalyzes the conversion of epoxyqueuosine (oQ) to queuosine (Q), which is a hypermodified base found in the wobble positions of tRNA(Asp), tRNA(Asn), tRNA(His) and tRNA(Tyr). This chain is Epoxyqueuosine reductase, found in Yersinia pestis.